Consider the following 405-residue polypeptide: Cystathionine gamma-lyase (405 aa).

The substrate site is built by Arg62, Tyr114, and Arg119. N6-(pyridoxal phosphate)lysine is present on Lys212. Residue Glu339 participates in substrate binding.

This sequence belongs to the trans-sulfuration enzymes family. As to quaternary structure, homotetramer. Interacts with CALM in a calcium-dependent manner. Requires pyridoxal 5'-phosphate as cofactor.

The protein localises to the cytoplasm. It catalyses the reaction L,L-cystathionine + H2O = 2-oxobutanoate + L-cysteine + NH4(+). The protein operates within amino-acid biosynthesis; L-cysteine biosynthesis; L-cysteine from L-homocysteine and L-serine: step 2/2. Functionally, catalyzes the last step in the trans-sulfuration pathway from methionine to cysteine. Has broad substrate specificity. Converts cystathionine to cysteine, ammonia and 2-oxobutanoate. Converts two cysteine molecules to lanthionine and hydrogen sulfide. Can also accept homocysteine as substrate. Specificity depends on the levels of the endogenous substrates. Generates the endogenous signaling molecule hydrogen sulfide (H2S), and so contributes to the regulation of blood pressure. Acts as a cysteine-protein sulfhydrase by mediating sulfhydration of target proteins: sulfhydration consists of converting -SH groups into -SSH on specific cysteine residues of target proteins such as GAPDH, PTPN1 and NF-kappa-B subunit RELA, thereby regulating their function. The polypeptide is Cystathionine gamma-lyase (CTH) (Bos taurus (Bovine)).